A 166-amino-acid chain; its full sequence is Desiccation-related protein At2g46140 (166 aa).

This sequence belongs to the LEA type 2 family.

The polypeptide is Desiccation-related protein At2g46140 (Arabidopsis thaliana (Mouse-ear cress)).